The sequence spans 149 residues: Large ribosomal subunit protein bL9 (149 aa).

It belongs to the bacterial ribosomal protein bL9 family.

Binds to the 23S rRNA. The sequence is that of Large ribosomal subunit protein bL9 from Anaeromyxobacter dehalogenans (strain 2CP-C).